The chain runs to 650 residues: Chaperone protein DnaK (650 aa).

Phosphothreonine; by autocatalysis is present on Thr-200. The disordered stretch occupies residues 613–634 (QAGAAGAAGAAEGAAHAGGAQQ).

The protein belongs to the heat shock protein 70 family.

In terms of biological role, acts as a chaperone. In Burkholderia vietnamiensis (strain G4 / LMG 22486) (Burkholderia cepacia (strain R1808)), this protein is Chaperone protein DnaK.